The primary structure comprises 154 residues: CASP-like protein 5C2 (154 aa).

The Cytoplasmic segment spans residues 1–17; that stretch reads MEHVPGSFGTSASFALR. The helical transmembrane segment at 18–38 threads the bilayer; it reads FGQTIFSAASLIFMCFDFDFY. Residues 39 to 41 lie on the Extracellular side of the membrane; sequence DFT. The helical transmembrane segment at 42 to 62 threads the bilayer; it reads TFCYLAMVMAIVTPWSILLAL. Residues 63–81 lie on the Cytoplasmic side of the membrane; it reads TDTYSVLVKLLPQELRVLS. The helical transmembrane segment at 82-102 threads the bilayer; the sequence is IVFAGDFVLSFLSLGGACAVA. The Extracellular portion of the chain corresponds to 103–128; it reads SATELLASADGKICDGSLCIQYQVSA. The helical transmembrane segment at 129-149 threads the bilayer; the sequence is ALAFLCWFLLLASALFNFWSL. Over 150–154 the chain is Cytoplasmic; it reads PSLYY.

Belongs to the Casparian strip membrane proteins (CASP) family. Homodimer and heterodimers.

The protein localises to the cell membrane. This is CASP-like protein 5C2 from Arabidopsis thaliana (Mouse-ear cress).